Here is a 167-residue protein sequence, read N- to C-terminus: N-alpha-acetyltransferase (167 aa).

Positions 12–167 (FTLRNARMDD…EDAYLMARPL (156 aa)) constitute an N-acetyltransferase domain. Residue Tyr-37 coordinates substrate. Position 88 (His-88) interacts with Zn(2+). Residues 92 to 94 (IAV) and 100 to 105 (RKGIAT) contribute to the acetyl-CoA site. Glu-127 lines the Zn(2+) pocket. Acetyl-CoA-binding positions include Asn-132 and 139-141 (YEK). Tyr-154 is a binding site for substrate.

Belongs to the acetyltransferase family. ARD1 subfamily. As to quaternary structure, homodimer.

It is found in the cytoplasm. The catalysed reaction is N-terminal L-alanyl-[protein] + acetyl-CoA = N-terminal N(alpha)-acetyl-L-alanyl-[protein] + CoA + H(+). It carries out the reaction N-terminal L-seryl-[protein] + acetyl-CoA = N-terminal N(alpha)-acetyl-L-seryl-[protein] + CoA + H(+). The enzyme catalyses N-terminal L-methionyl-L-leucyl-[protein] + acetyl-CoA = N-terminal N(alpha)-acetyl-L-methionyl-L-leucyl-[protein] + CoA + H(+). It catalyses the reaction N-terminal L-methionyl-L-glutamyl-[protein] + acetyl-CoA = N-terminal N(alpha)-acetyl-L-methionyl-L-glutamyl-[protein] + CoA + H(+). In terms of biological role, displays alpha (N-terminal) acetyltransferase activity. Catalyzes the covalent attachment of an acetyl moiety from acetyl-CoA to the free alpha-amino group at the N-terminus of a protein. NAT is able to acetylate the alpha-amino group of methionine, alanine and serine N-terminal residue substrates, however it has a preference for Ser-N-terminal substrates. In Saccharolobus solfataricus (strain ATCC 35092 / DSM 1617 / JCM 11322 / P2) (Sulfolobus solfataricus), this protein is N-alpha-acetyltransferase.